A 188-amino-acid polypeptide reads, in one-letter code: MIVILDNGGQYVHRIHRSLKYIGVSSKIVPNTTPLEEIESNKEVKGIILSGGPDIEKAKNCIDIALNAKLPILGICLGHQLIALAYGGEVGRAEAEEYALTKVYVDKENDLFKNVPREFNAWASHKDEVKKVPEGFEILAHSDICQVEAMKHKTKPIYGVQFHPEVAHTEYGNEILKNFCKVCGYKFE.

The 188-residue stretch at 1–188 (MIVILDNGGQ…FCKVCGYKFE (188 aa)) folds into the Glutamine amidotransferase type-1 domain. Cys76 functions as the Nucleophile in the catalytic mechanism. Residues His163 and Glu165 contribute to the active site.

In terms of assembly, heterodimer composed of a glutamine amidotransferase subunit (A) and a GMP-binding subunit (B).

The enzyme catalyses XMP + L-glutamine + ATP + H2O = GMP + L-glutamate + AMP + diphosphate + 2 H(+). The protein operates within purine metabolism; GMP biosynthesis; GMP from XMP (L-Gln route): step 1/1. Its function is as follows. Catalyzes the synthesis of GMP from XMP. The chain is GMP synthase [glutamine-hydrolyzing] subunit A from Methanocaldococcus jannaschii (strain ATCC 43067 / DSM 2661 / JAL-1 / JCM 10045 / NBRC 100440) (Methanococcus jannaschii).